Consider the following 179-residue polypeptide: Hypoxanthine-guanine phosphoribosyltransferase (179 aa).

The diphosphate site is built by Lys-42 and Gly-43. Residues Glu-98 and Asp-99 each coordinate Mg(2+). Glu-102 serves as the catalytic Proton acceptor. GMP is bound by residues Lys-130, 151–152, and Asp-158; that span reads FV. Arg-164 lines the diphosphate pocket.

The protein belongs to the purine/pyrimidine phosphoribosyltransferase family. Mg(2+) serves as cofactor.

It localises to the cytoplasm. The enzyme catalyses IMP + diphosphate = hypoxanthine + 5-phospho-alpha-D-ribose 1-diphosphate. The catalysed reaction is GMP + diphosphate = guanine + 5-phospho-alpha-D-ribose 1-diphosphate. It functions in the pathway purine metabolism; IMP biosynthesis via salvage pathway; IMP from hypoxanthine: step 1/1. It participates in purine metabolism; GMP biosynthesis via salvage pathway; GMP from guanine: step 1/1. Its function is as follows. Purine salvage pathway enzyme that catalyzes the transfer of the ribosyl-5-phosphate group from 5-phospho-alpha-D-ribose 1-diphosphate (PRPP) to the N9 position of the 6-oxopurines hypoxanthine and guanine to form the corresponding ribonucleotides IMP (inosine 5'-monophosphate) and GMP (guanosine 5'-monophosphate), with the release of PPi. This is Hypoxanthine-guanine phosphoribosyltransferase (hpt) from Staphylococcus epidermidis (strain ATCC 35984 / DSM 28319 / BCRC 17069 / CCUG 31568 / BM 3577 / RP62A).